Consider the following 198-residue polypeptide: Ribonuclease HII (198 aa).

Residues 10 to 198 enclose the RNase H type-2 domain; sequence HLVAGVDEVG…PVKRALELAS (189 aa). Asp16, Glu17, and Asp108 together coordinate a divalent metal cation.

It belongs to the RNase HII family. It depends on Mn(2+) as a cofactor. Mg(2+) is required as a cofactor.

It localises to the cytoplasm. The enzyme catalyses Endonucleolytic cleavage to 5'-phosphomonoester.. In terms of biological role, endonuclease that specifically degrades the RNA of RNA-DNA hybrids. The chain is Ribonuclease HII from Salmonella arizonae (strain ATCC BAA-731 / CDC346-86 / RSK2980).